Here is a 314-residue protein sequence, read N- to C-terminus: MKELDVITLLQEIRHLAQESNAVILAHYYQDSEIQDIADFIGDSLELSRKAATTTADVIVFCGVYFMAEVAKIINPAKKVLLPDLNAGCSLADSCDAESFKKFRELHKDCVSITYINSLAEVKAYSDIICTSSSAEKIIRQIPEEKQILFAPDKFLGAFLEKKTNRKMILWPGTCIVHESFSERELIDMMVRHDKAYVLAHPECPGHLLKYAHFIGSTTQLLKFSSDNPNSEFIVLTEEGIIHQMKKVSSGSTFYIVKTSDSGGCVSCSKCPHMRLNTLEKLYLCLKNGYPEITLDPEISSMAKRSLDAMLKMS.

His27 and Ser44 together coordinate iminosuccinate. Cys89 lines the [4Fe-4S] cluster pocket. Iminosuccinate is bound by residues 115 to 117 and Ser132; that span reads YIN. Cys175 is a [4Fe-4S] cluster binding site. Iminosuccinate contacts are provided by residues 201–203 and Thr218; that span reads HPE. Residue Cys271 coordinates [4Fe-4S] cluster.

Belongs to the quinolinate synthase family. Type 2 subfamily. It depends on [4Fe-4S] cluster as a cofactor.

It localises to the cytoplasm. It carries out the reaction iminosuccinate + dihydroxyacetone phosphate = quinolinate + phosphate + 2 H2O + H(+). It functions in the pathway cofactor biosynthesis; NAD(+) biosynthesis; quinolinate from iminoaspartate: step 1/1. In terms of biological role, catalyzes the condensation of iminoaspartate with dihydroxyacetone phosphate to form quinolinate. The chain is Quinolinate synthase from Ehrlichia chaffeensis (strain ATCC CRL-10679 / Arkansas).